A 371-amino-acid polypeptide reads, in one-letter code: Diguanylate cyclase A (371 aa).

The GGDEF domain maps to 233-366 (ETLSILMIDI…GRNRVTLSKN (134 aa)). Mg(2+) is bound by residues D241, I242, and E284. Residue E284 is the Proton acceptor of the active site.

As to quaternary structure, exists as a homodimer and as larger aggregates. Both dimers and aggregates possess DGC activity. Mg(2+) is required as a cofactor. Mn(2+) serves as cofactor.

The protein localises to the cytoplasm. The enzyme catalyses 2 GTP = 3',3'-c-di-GMP + 2 diphosphate. Its activity is regulated as follows. Allosterically regulated by a feedback inhibition loop. Functionally, catalyzes the conversion of GTP to cyclic-di-GMP (c-di-GMP). Shows activity under aerobic and anaerobic reaction conditions. The polypeptide is Diguanylate cyclase A (Treponema denticola (strain ATCC 35405 / DSM 14222 / CIP 103919 / JCM 8153 / KCTC 15104)).